The chain runs to 425 residues: Serine--tRNA ligase (425 aa).

Disordered regions lie at residues 43-68 (QRSS…GSDP) and 108-131 (LPNL…RHCW). Positions 117–131 (PEGRDENDNQERHCW) are enriched in basic and acidic residues. Position 233–235 (233–235 (TAE)) interacts with L-serine. An ATP-binding site is contributed by 264 to 266 (RRE). Residue glutamate 287 participates in L-serine binding. 351–354 (EISS) serves as a coordination point for ATP. Position 385 (serine 385) interacts with L-serine.

It belongs to the class-II aminoacyl-tRNA synthetase family. Type-1 seryl-tRNA synthetase subfamily. As to quaternary structure, homodimer. The tRNA molecule binds across the dimer.

Its subcellular location is the cytoplasm. The catalysed reaction is tRNA(Ser) + L-serine + ATP = L-seryl-tRNA(Ser) + AMP + diphosphate + H(+). It carries out the reaction tRNA(Sec) + L-serine + ATP = L-seryl-tRNA(Sec) + AMP + diphosphate + H(+). It functions in the pathway aminoacyl-tRNA biosynthesis; selenocysteinyl-tRNA(Sec) biosynthesis; L-seryl-tRNA(Sec) from L-serine and tRNA(Sec): step 1/1. Functionally, catalyzes the attachment of serine to tRNA(Ser). Is also able to aminoacylate tRNA(Sec) with serine, to form the misacylated tRNA L-seryl-tRNA(Sec), which will be further converted into selenocysteinyl-tRNA(Sec). The sequence is that of Serine--tRNA ligase from Prochlorococcus marinus (strain MIT 9303).